Here is a 294-residue protein sequence, read N- to C-terminus: 4-hydroxy-tetrahydrodipicolinate synthase (294 aa).

T47 is a binding site for pyruvate. The active-site Proton donor/acceptor is Y135. Catalysis depends on K163, which acts as the Schiff-base intermediate with substrate. I206 is a binding site for pyruvate.

Belongs to the DapA family. As to quaternary structure, homodimer.

It localises to the cytoplasm. It carries out the reaction L-aspartate 4-semialdehyde + pyruvate = (2S,4S)-4-hydroxy-2,3,4,5-tetrahydrodipicolinate + H2O + H(+). Its pathway is amino-acid biosynthesis; L-lysine biosynthesis via DAP pathway; (S)-tetrahydrodipicolinate from L-aspartate: step 3/4. Its function is as follows. Catalyzes the condensation of (S)-aspartate-beta-semialdehyde [(S)-ASA] and pyruvate to 4-hydroxy-tetrahydrodipicolinate (HTPA). The chain is 4-hydroxy-tetrahydrodipicolinate synthase from Staphylococcus epidermidis (strain ATCC 35984 / DSM 28319 / BCRC 17069 / CCUG 31568 / BM 3577 / RP62A).